The primary structure comprises 347 residues: Dihydroorotase (347 aa).

2 residues coordinate Zn(2+): His17 and His19. Residues 19–21 and Asn45 contribute to the substrate site; that span reads HVR. Zn(2+) is bound by residues Lys102, His139, and His177. Lys102 is modified (N6-carboxylysine). Residue His139 coordinates substrate. Residue Leu222 participates in substrate binding. Residue Asp250 participates in Zn(2+) binding. Residue Asp250 is part of the active site. His254 and Ala266 together coordinate substrate.

It belongs to the metallo-dependent hydrolases superfamily. DHOase family. Class II DHOase subfamily. In terms of assembly, homodimer. Zn(2+) serves as cofactor.

It catalyses the reaction (S)-dihydroorotate + H2O = N-carbamoyl-L-aspartate + H(+). It functions in the pathway pyrimidine metabolism; UMP biosynthesis via de novo pathway; (S)-dihydroorotate from bicarbonate: step 3/3. Catalyzes the reversible cyclization of carbamoyl aspartate to dihydroorotate. This chain is Dihydroorotase, found in Acidovorax sp. (strain JS42).